The primary structure comprises 88 residues: Small ribosomal subunit protein uS15 (88 aa).

It belongs to the universal ribosomal protein uS15 family. Part of the 30S ribosomal subunit. Forms a bridge to the 50S subunit in the 70S ribosome, contacting the 23S rRNA.

Its function is as follows. One of the primary rRNA binding proteins, it binds directly to 16S rRNA where it helps nucleate assembly of the platform of the 30S subunit by binding and bridging several RNA helices of the 16S rRNA. In terms of biological role, forms an intersubunit bridge (bridge B4) with the 23S rRNA of the 50S subunit in the ribosome. The sequence is that of Small ribosomal subunit protein uS15 from Sorangium cellulosum (strain So ce56) (Polyangium cellulosum (strain So ce56)).